The primary structure comprises 532 residues: tRNA-2-methylthio-N(6)-dimethylallyladenosine synthase 2 (532 aa).

Residues 1 to 21 (MTSTVAHGAGSAGPADDAEPM) are disordered. The region spanning 24 to 140 (RTYQVRTYGC…LPALLDRARH (117 aa)) is the MTTase N-terminal domain. [4Fe-4S] cluster is bound by residues Cys33, Cys69, Cys103, Cys177, Cys181, and Cys184. One can recognise a Radical SAM core domain in the interval 163–399 (RESAYAAWVS…VELQEQISLE (237 aa)). The region spanning 402–470 (RAIVGQRVEL…PHHLIADGGI (69 aa)) is the TRAM domain. The interval 510-532 (TSCGSAGGCGSADGAGSSAGDPQ) is disordered. Residues 523–532 (GAGSSAGDPQ) are compositionally biased toward low complexity.

This sequence belongs to the methylthiotransferase family. MiaB subfamily. As to quaternary structure, monomer. [4Fe-4S] cluster serves as cofactor.

The protein localises to the cytoplasm. It carries out the reaction N(6)-dimethylallyladenosine(37) in tRNA + (sulfur carrier)-SH + AH2 + 2 S-adenosyl-L-methionine = 2-methylsulfanyl-N(6)-dimethylallyladenosine(37) in tRNA + (sulfur carrier)-H + 5'-deoxyadenosine + L-methionine + A + S-adenosyl-L-homocysteine + 2 H(+). Its function is as follows. Catalyzes the methylthiolation of N6-(dimethylallyl)adenosine (i(6)A), leading to the formation of 2-methylthio-N6-(dimethylallyl)adenosine (ms(2)i(6)A) at position 37 in tRNAs that read codons beginning with uridine. This Mycobacterium marinum (strain ATCC BAA-535 / M) protein is tRNA-2-methylthio-N(6)-dimethylallyladenosine synthase 2.